The following is a 71-amino-acid chain: MKKTFYHYMMKHRAALFKNEISDLAEAMYDDLSFPKQSEDYDVISSYLELSGMLESMSIFDDAWDLYIQER.

The protein belongs to the UPF0346 family.

This is UPF0346 protein BcerKBAB4_2120 from Bacillus mycoides (strain KBAB4) (Bacillus weihenstephanensis).